Reading from the N-terminus, the 159-residue chain is Ribonuclease H (159 aa).

The RNase H type-1 domain occupies 1–145; it reads MTHIRAIYTD…CDLIARRLSR (145 aa). Mg(2+) is bound by residues Asp10, Glu49, Asp74, and Asp137.

It belongs to the RNase H family. As to quaternary structure, monomer. It depends on Mg(2+) as a cofactor.

The protein localises to the cytoplasm. It catalyses the reaction Endonucleolytic cleavage to 5'-phosphomonoester.. Its function is as follows. Endonuclease that specifically degrades the RNA of RNA-DNA hybrids. This Thermosynechococcus vestitus (strain NIES-2133 / IAM M-273 / BP-1) protein is Ribonuclease H.